Reading from the N-terminus, the 153-residue chain is Late embryogenesis abundant protein B19.4 (153 aa).

A disordered region spans residues 1 to 153 (MASGQQERSE…IDESKFKTKS (153 aa)). Basic and acidic residues-rich tracts occupy residues 7–19 (ERSELDRMAREGE), 32–122 (EAQE…EMGR), and 133–153 (GGERAAREGIDIDESKFKTKS). Tandem repeats lie at residues 43-62 (RGGQTRKEQLGEEGYREMGH), 63-82 (KGGETRKEQLGEEGYREMGH), 83-102 (KGGETRKEQLGEEGYREMGH), and 103-122 (KGGETRKEQMGEEGYREMGR). The interval 43–122 (RGGQTRKEQL…GEEGYREMGR (80 aa)) is 4 X 20 AA tandem repeats.

Belongs to the small hydrophilic plant seed protein family.

Its function is as follows. Lea proteins are late embryonic proteins abundant in higher plant seed embryos. The sequence is that of Late embryogenesis abundant protein B19.4 (B19.4) from Hordeum vulgare (Barley).